The chain runs to 72 residues: Protein CYSTEINE-RICH TRANSMEMBRANE MODULE 1 (72 aa).

The segment covering 1-11 has biased composition (polar residues); sequence MSQYDHNQSAG. The segment at 1-46 is disordered; that stretch reads MSQYDHNQSAGANPPPPMSTCTSPPPPIGYPTNQPSHGSVAQGKVE. A compositionally biased stretch (pro residues) spans 13–29; sequence NPPPPMSTCTSPPPPIG. A helical membrane pass occupies residues 49-65; the sequence is SKGDGFFKGCLAAMCCC.

It belongs to the CYSTM1 family. As to quaternary structure, heterodimers. Binds weakly to CYSTM7 and WIH1/CYSTM13. In terms of tissue distribution, mostly expressed in roots, flowers and siliques and, to a lower extent, in stems and leaves.

The protein localises to the cell membrane. The protein resides in the nucleus. In terms of biological role, may be involved in aluminium (Al) tolerance. Involved in resistance to abiotic stress. The polypeptide is Protein CYSTEINE-RICH TRANSMEMBRANE MODULE 1 (Arabidopsis thaliana (Mouse-ear cress)).